A 508-amino-acid polypeptide reads, in one-letter code: Photosystem II CP47 reaction center protein (508 aa).

A run of 6 helical transmembrane segments spans residues 21-36 (AVHI…WAGS), 101-115 (IVFS…IWHW), 140-156 (GIHL…FGAF), 203-218 (IAAG…FHLS), 237-252 (VLSS…AFVV), and 457-472 (TFAL…HGAR).

Belongs to the PsbB/PsbC family. PsbB subfamily. In terms of assembly, PSII is composed of 1 copy each of membrane proteins PsbA, PsbB, PsbC, PsbD, PsbE, PsbF, PsbH, PsbI, PsbJ, PsbK, PsbL, PsbM, PsbT, PsbX, PsbY, PsbZ, Psb30/Ycf12, at least 3 peripheral proteins of the oxygen-evolving complex and a large number of cofactors. It forms dimeric complexes. The cofactor is Binds multiple chlorophylls. PSII binds additional chlorophylls, carotenoids and specific lipids..

The protein resides in the plastid. It is found in the chloroplast thylakoid membrane. In terms of biological role, one of the components of the core complex of photosystem II (PSII). It binds chlorophyll and helps catalyze the primary light-induced photochemical processes of PSII. PSII is a light-driven water:plastoquinone oxidoreductase, using light energy to abstract electrons from H(2)O, generating O(2) and a proton gradient subsequently used for ATP formation. This is Photosystem II CP47 reaction center protein from Lolium perenne (Perennial ryegrass).